We begin with the raw amino-acid sequence, 412 residues long: Multifunctional CCA protein (412 aa).

Residues Gly-8 and Arg-11 each contribute to the ATP site. 2 residues coordinate CTP: Gly-8 and Arg-11. Positions 21 and 23 each coordinate Mg(2+). 3 residues coordinate ATP: Arg-91, Arg-137, and Arg-140. CTP-binding residues include Arg-91, Arg-137, and Arg-140. An HD domain is found at 228–329; that stretch reads TGIHTLMTLS…VKLFDSIDAW (102 aa).

The protein belongs to the tRNA nucleotidyltransferase/poly(A) polymerase family. Bacterial CCA-adding enzyme type 1 subfamily. In terms of assembly, monomer. Can also form homodimers and oligomers. Mg(2+) is required as a cofactor. The cofactor is Ni(2+).

The enzyme catalyses a tRNA precursor + 2 CTP + ATP = a tRNA with a 3' CCA end + 3 diphosphate. The catalysed reaction is a tRNA with a 3' CCA end + 2 CTP + ATP = a tRNA with a 3' CCACCA end + 3 diphosphate. Catalyzes the addition and repair of the essential 3'-terminal CCA sequence in tRNAs without using a nucleic acid template. Adds these three nucleotides in the order of C, C, and A to the tRNA nucleotide-73, using CTP and ATP as substrates and producing inorganic pyrophosphate. tRNA 3'-terminal CCA addition is required both for tRNA processing and repair. Also involved in tRNA surveillance by mediating tandem CCA addition to generate a CCACCA at the 3' terminus of unstable tRNAs. While stable tRNAs receive only 3'-terminal CCA, unstable tRNAs are marked with CCACCA and rapidly degraded. In Shigella flexneri, this protein is Multifunctional CCA protein.